Here is a 151-residue protein sequence, read N- to C-terminus: UPF0178 protein mma_0312 (151 aa).

Belongs to the UPF0178 family.

The protein is UPF0178 protein mma_0312 of Janthinobacterium sp. (strain Marseille) (Minibacterium massiliensis).